Reading from the N-terminus, the 311-residue chain is Aspartate carbamoyltransferase catalytic subunit (311 aa).

Carbamoyl phosphate contacts are provided by arginine 55 and threonine 56. Lysine 85 lines the L-aspartate pocket. Carbamoyl phosphate is bound by residues arginine 106, histidine 135, and glutamine 138. The L-aspartate site is built by arginine 168 and arginine 230. Residues leucine 268 and proline 269 each contribute to the carbamoyl phosphate site.

This sequence belongs to the aspartate/ornithine carbamoyltransferase superfamily. ATCase family. As to quaternary structure, heterododecamer (2C3:3R2) of six catalytic PyrB chains organized as two trimers (C3), and six regulatory PyrI chains organized as three dimers (R2).

The enzyme catalyses carbamoyl phosphate + L-aspartate = N-carbamoyl-L-aspartate + phosphate + H(+). It functions in the pathway pyrimidine metabolism; UMP biosynthesis via de novo pathway; (S)-dihydroorotate from bicarbonate: step 2/3. Catalyzes the condensation of carbamoyl phosphate and aspartate to form carbamoyl aspartate and inorganic phosphate, the committed step in the de novo pyrimidine nucleotide biosynthesis pathway. The polypeptide is Aspartate carbamoyltransferase catalytic subunit (Salmonella paratyphi A (strain AKU_12601)).